Here is a 1342-residue protein sequence, read N- to C-terminus: DNA-directed RNA polymerase subunit beta (1342 aa).

Belongs to the RNA polymerase beta chain family. The RNAP catalytic core consists of 2 alpha, 1 beta, 1 beta' and 1 omega subunit. When a sigma factor is associated with the core the holoenzyme is formed, which can initiate transcription.

The catalysed reaction is RNA(n) + a ribonucleoside 5'-triphosphate = RNA(n+1) + diphosphate. DNA-dependent RNA polymerase catalyzes the transcription of DNA into RNA using the four ribonucleoside triphosphates as substrates. In Pseudoalteromonas atlantica (strain T6c / ATCC BAA-1087), this protein is DNA-directed RNA polymerase subunit beta.